Consider the following 558-residue polypeptide: NAD(P)H-quinone oxidoreductase chain 4 (558 aa).

A run of 14 helical transmembrane segments spans residues 25–45 (FPWL…VPFI), 56–76 (WYAL…YLKG), 111–131 (LILL…PVSF), 133–153 (PKLF…VFAV), 157–177 (LLFF…LAIW), 189–209 (FIIY…AMGF), 230–250 (GFQL…LPVV), 264–284 (TAPV…YALL), 298–318 (FAPL…LTSF), 327–347 (IAYS…SFSS), 353–373 (AMLQ…LVGA), 395–417 (IMFA…SGFV), 438–458 (IVIA…LLSM), and 485–505 (IYVI…PRIM).

This sequence belongs to the complex I subunit 4 family.

The protein resides in the cellular thylakoid membrane. It carries out the reaction a plastoquinone + NADH + (n+1) H(+)(in) = a plastoquinol + NAD(+) + n H(+)(out). The enzyme catalyses a plastoquinone + NADPH + (n+1) H(+)(in) = a plastoquinol + NADP(+) + n H(+)(out). In terms of biological role, NDH-1 shuttles electrons from NAD(P)H, via FMN and iron-sulfur (Fe-S) centers, to quinones in the respiratory chain. The immediate electron acceptor for the enzyme in this species is believed to be plastoquinone. Couples the redox reaction to proton translocation (for every two electrons transferred, four hydrogen ions are translocated across the cytoplasmic membrane), and thus conserves the redox energy in a proton gradient. The chain is NAD(P)H-quinone oxidoreductase chain 4 from Prochlorococcus marinus (strain MIT 9211).